Here is a 261-residue protein sequence, read N- to C-terminus: Thiazole synthase (261 aa).

Catalysis depends on Lys102, which acts as the Schiff-base intermediate with DXP. Residues Gly163, 189-190, and 211-212 each bind 1-deoxy-D-xylulose 5-phosphate; these read AG and NT.

Belongs to the ThiG family. As to quaternary structure, homotetramer. Forms heterodimers with either ThiH or ThiS.

It is found in the cytoplasm. It catalyses the reaction [ThiS sulfur-carrier protein]-C-terminal-Gly-aminoethanethioate + 2-iminoacetate + 1-deoxy-D-xylulose 5-phosphate = [ThiS sulfur-carrier protein]-C-terminal Gly-Gly + 2-[(2R,5Z)-2-carboxy-4-methylthiazol-5(2H)-ylidene]ethyl phosphate + 2 H2O + H(+). It participates in cofactor biosynthesis; thiamine diphosphate biosynthesis. In terms of biological role, catalyzes the rearrangement of 1-deoxy-D-xylulose 5-phosphate (DXP) to produce the thiazole phosphate moiety of thiamine. Sulfur is provided by the thiocarboxylate moiety of the carrier protein ThiS. In vitro, sulfur can be provided by H(2)S. The polypeptide is Thiazole synthase (Acinetobacter baumannii (strain AB307-0294)).